Consider the following 745-residue polypeptide: Cysteine protease atg4 (745 aa).

Low complexity-rich tracts occupy residues 29 to 42 (QQSYLRQQQQAPQQ), 52 to 64 (SPTSSSSTPSSST), and 194 to 215 (NNNSNSNNNNNHNNNHNNNNNN). Disordered regions lie at residues 29–68 (QQSYLRQQQQAPQQISYGFNQPNSPTSSSSTPSSSTAMGN) and 192–215 (FQNNNSNSNNNNNHNNNHNNNNNN). Cysteine 262 (nucleophile) is an active-site residue. Disordered regions lie at residues 344-363 (LNRGGGGSSKGKKKKEKEEE) and 439-480 (QNNN…NGYN). Low complexity predominate over residues 439 to 477 (QNNNKNNNNNNPTTTTTTTTTATSSNNNNNQSPPSRVPN). Residues aspartate 562 and histidine 564 contribute to the active site. Residues 686 to 745 (HIPYNPNNNQNNNQNNNNNNNKNNNNNTNQQQTPNYPPKLNTYQPDFSSDGEIDDFTMVG) are disordered. Residues 688 to 719 (PYNPNNNQNNNQNNNNNNNKNNNNNTNQQQTP) show a composition bias toward low complexity. Residues 734–745 (SDGEIDDFTMVG) show a composition bias toward acidic residues.

Belongs to the peptidase C54 family.

The protein resides in the cytoplasm. The catalysed reaction is [protein]-C-terminal L-amino acid-glycyl-phosphatidylethanolamide + H2O = [protein]-C-terminal L-amino acid-glycine + a 1,2-diacyl-sn-glycero-3-phosphoethanolamine. In terms of biological role, cysteine protease that plays a key role in autophagy by mediating both proteolytic activation and delipidation of ATG8 family proteins. The protease activity is required for proteolytic activation of ATG8 family proteins: cleaves the C-terminal amino acid of ATG8 proteins to reveal a C-terminal glycine. Exposure of the glycine at the C-terminus is essential for ATG8 proteins conjugation to phosphatidylethanolamine (PE) and insertion to membranes, which is necessary for autophagy. In addition to the protease activity, also mediates delipidation of PE-conjugated ATG8 proteins. The polypeptide is Cysteine protease atg4 (atg4-1) (Dictyostelium discoideum (Social amoeba)).